A 198-amino-acid polypeptide reads, in one-letter code: Recombination protein RecR (198 aa).

A C4-type zinc finger spans residues 57–72 (CSVCHNITDTDPCRIC). Positions 80–175 (SVICVVQDAK…KVTRIAHGLP (96 aa)) constitute a Toprim domain.

The protein belongs to the RecR family.

In terms of biological role, may play a role in DNA repair. It seems to be involved in an RecBC-independent recombinational process of DNA repair. It may act with RecF and RecO. In Halalkalibacterium halodurans (strain ATCC BAA-125 / DSM 18197 / FERM 7344 / JCM 9153 / C-125) (Bacillus halodurans), this protein is Recombination protein RecR.